Consider the following 94-residue polypeptide: Small ribosomal subunit protein bS20 (94 aa).

A compositionally biased stretch (basic and acidic residues) spans 1–10 (MANHASADKR). A disordered region spans residues 1–20 (MANHASADKRNRQRITRTAR). Basic residues predominate over residues 11–20 (NRQRITRTAR).

It belongs to the bacterial ribosomal protein bS20 family.

Binds directly to 16S ribosomal RNA. This is Small ribosomal subunit protein bS20 from Sorangium cellulosum (strain So ce56) (Polyangium cellulosum (strain So ce56)).